The primary structure comprises 746 residues: NAD(P)H-quinone oxidoreductase subunit 5, chloroplastic (746 aa).

Transmembrane regions (helical) follow at residues 9–29, 40–60, 89–109, 125–145, 147–167, 185–205, 221–241, 258–278, 280–300, 327–347, 354–374, 396–416, 425–445, 547–567, 608–628, and 723–743; these read WIIPFIPLPVPILLGVGLLLF, WTFLSIFLLSIVMIFSLYLSI, IDPLTSIMLILITTVGILVLI, FAYMGFFNTSMLGLVTSSNLI, VYFFWELVGMCSYLLIGFWFT, GDFGLLLGILGLYWITGSFEF, VNLLFFTLCAFLLFVGPIAKS, TPISALIHAATMVAAGIFLVA, LLPIFIVIPSIMYIISLIGII, LGYMMLALGMGSYRAALFHLI, ALLFLGSGSIIHSMEAIVGYS, TAFLVGTLSLCGIPPLACFWS, FLFSPIFAIIACSTAGLTAFY, ILFPMLLLLLFTLFVGAIGIP, FSVSIALFGIFIAYCLYKPFY, and YLFLYLSYVLIFLTILFFFYF.

The protein belongs to the complex I subunit 5 family. As to quaternary structure, NDH is composed of at least 16 different subunits, 5 of which are encoded in the nucleus.

Its subcellular location is the plastid. The protein resides in the chloroplast thylakoid membrane. The catalysed reaction is a plastoquinone + NADH + (n+1) H(+)(in) = a plastoquinol + NAD(+) + n H(+)(out). It catalyses the reaction a plastoquinone + NADPH + (n+1) H(+)(in) = a plastoquinol + NADP(+) + n H(+)(out). In terms of biological role, NDH shuttles electrons from NAD(P)H:plastoquinone, via FMN and iron-sulfur (Fe-S) centers, to quinones in the photosynthetic chain and possibly in a chloroplast respiratory chain. The immediate electron acceptor for the enzyme in this species is believed to be plastoquinone. Couples the redox reaction to proton translocation, and thus conserves the redox energy in a proton gradient. This Lobularia maritima (Sweet alyssum) protein is NAD(P)H-quinone oxidoreductase subunit 5, chloroplastic (ndhF).